A 1323-amino-acid polypeptide reads, in one-letter code: Glutamate receptor ionotropic, NMDA 2D (1323 aa).

The N-terminal stretch at 1-27 is a signal peptide; sequence MRGAGGPRGPRGPAKMLLLLALACASP. The Extracellular segment spans residues 28–579; sequence FPEEVPGPGA…SPSAFLEPYS (552 aa). N-linked (GlcNAc...) asparagine glycosylation is present at asparagine 89. Cysteine 101 and cysteine 345 form a disulfide bridge. Asparagine 349, asparagine 363, asparagine 381, and asparagine 464 each carry an N-linked (GlcNAc...) asparagine glycan. Cystine bridges form between cysteine 452/cysteine 480 and cysteine 459/cysteine 481. L-glutamate is bound by residues serine 536, threonine 538, and arginine 543. Residue asparagine 566 is glycosylated (N-linked (GlcNAc...) asparagine). A helical transmembrane segment spans residues 580–601; the sequence is PAVWVMMFVMCLTVVAVTVFIF. Topologically, residues 602 to 626 are cytoplasmic; sequence EYLSPVGYNRSLATGKRPGGSTFTI. An intramembrane region (discontinuously helical) is located at residues 627–638; it reads GKSIWLLWALVF. A pore-forming region spans residues 628-647; it reads KSIWLLWALVFNNSVPVENP. The Cytoplasmic portion of the chain corresponds to 639 to 650; that stretch reads NNSVPVENPRGT. Residues 651 to 671 traverse the membrane as a helical segment; that stretch reads TSKIMVLVWAFFAVIFLASYT. At 672–840 the chain is on the extracellular side; sequence ANLAAFMIQE…EVMSSKLDID (169 aa). Asparagine 712 carries an N-linked (GlcNAc...) asparagine glycan. Positions 714, 715, and 756 each coordinate L-glutamate. An intrachain disulfide couples cysteine 770 to cysteine 825. A helical transmembrane segment spans residues 841–864; it reads NMAGVFYMLLVAMGLSLLVFAWEH. Over 865-1323 the chain is Cytoplasmic; sequence LVYWRLRHCL…AHFSSLESEV (459 aa). Disordered stretches follow at residues 897 to 952, 977 to 1112, and 1201 to 1323; these read EAAP…PGGA, AAPR…SLGG, and PWAA…ESEV. The span at 899 to 929 shows a compositional bias: pro residues; sequence APPPAKPPPPPQPLPSPAYPAARPPPGPAPF. The segment covering 931–940 has biased composition (basic and acidic residues); it reads PRERAAADRW. Residues 977 to 986 show a composition bias toward low complexity; the sequence is AAPRGAAGRP. The segment covering 987-1001 has biased composition (pro residues); the sequence is LSPPTTQPPQKPPPS. Low complexity predominate over residues 1030–1039; it reads AAAAAAVGPP. The segment covering 1080–1092 has biased composition (pro residues); that stretch reads TAPPPRRAAPPPC. Basic residues predominate over residues 1208–1228; sequence PRRRARCGCPRPHPHRPRASH. Arginine 1303 is modified (omega-N-methylarginine). Phosphoserine is present on serine 1313. The PDZ-binding signature appears at 1321–1323; that stretch reads SEV.

The protein belongs to the glutamate-gated ion channel (TC 1.A.10.1) family. NR2D/GRIN2D subfamily. As to quaternary structure, heterotetramer. Forms heterotetrameric channels composed of two GluN1/zeta subunits (GRIN1), and two identical GluN2/epsilon subunits (GRIN2A, GRIN2B, GRIN2C or GRIN2D) or GluN3 subunits (GRIN3A or GRIN3B) (in vitro). In vivo, the subunit composition may depend on the expression levels of the different subunits. Interacts with PDZ domains of PATJ and DLG4. As to expression, detected in neonate brain synaptosomes (at protein level).

It is found in the cell membrane. It localises to the postsynaptic cell membrane. It carries out the reaction Ca(2+)(in) = Ca(2+)(out). It catalyses the reaction Na(+)(in) = Na(+)(out). The catalysed reaction is K(+)(in) = K(+)(out). Component of N-methyl-D-aspartate (NMDA) receptors (NMDARs) that function as heterotetrameric, ligand-gated cation channels with high calcium permeability and voltage-dependent block by Mg(2+). Participates in synaptic plasticity for learning and memory formation. Channel activation requires binding of the neurotransmitter L-glutamate to the GluN2 subunit, glycine or D-serine binding to the GluN1 subunit, plus membrane depolarization to eliminate channel inhibition by Mg(2+). NMDARs mediate simultaneously the potasium efflux and the influx of calcium and sodium. Each GluN2 subunit confers differential attributes to channel properties, including activation, deactivation and desensitization kinetics, pH sensitivity, Ca2(+) permeability, and binding to allosteric modulators. The sequence is that of Glutamate receptor ionotropic, NMDA 2D from Mus musculus (Mouse).